An 83-amino-acid polypeptide reads, in one-letter code: Cytochrome b559 subunit alpha (83 aa).

The helical transmembrane segment at 21 to 35 (VIHSITIPSLFIAGW) threads the bilayer. Residue H23 participates in heme binding.

This sequence belongs to the PsbE/PsbF family. As to quaternary structure, heterodimer of an alpha subunit and a beta subunit. PSII is composed of 1 copy each of membrane proteins PsbA, PsbB, PsbC, PsbD, PsbE, PsbF, PsbH, PsbI, PsbJ, PsbK, PsbL, PsbM, PsbT, PsbX, PsbY, PsbZ, Psb30/Ycf12, at least 3 peripheral proteins of the oxygen-evolving complex and a large number of cofactors. It forms dimeric complexes. Requires heme b as cofactor.

The protein resides in the plastid. Its subcellular location is the chloroplast thylakoid membrane. In terms of biological role, this b-type cytochrome is tightly associated with the reaction center of photosystem II (PSII). PSII is a light-driven water:plastoquinone oxidoreductase that uses light energy to abstract electrons from H(2)O, generating O(2) and a proton gradient subsequently used for ATP formation. It consists of a core antenna complex that captures photons, and an electron transfer chain that converts photonic excitation into a charge separation. The protein is Cytochrome b559 subunit alpha of Tupiella akineta (Green alga).